Reading from the N-terminus, the 462-residue chain is Zinc finger CCCH domain-containing protein 34 (462 aa).

The span at 1-13 shows a compositional bias: basic and acidic residues; the sequence is MERYGRPGEEGSR. Residues 1–26 form a disordered region; sequence MERYGRPGEEGSRSDPSLEWTSHGGE. 3 consecutive C3H1-type zinc fingers follow at residues 54–82, 100–128, and 148–176; these read RPDE…HPRD, RMGH…HPRQ, and RPGE…HPVP. Residues 288-303 show a composition bias toward polar residues; the sequence is TGTYQSVPSSNSTSKE. Residues 288 to 310 are disordered; it reads TGTYQSVPSSNSTSKEFPQRPDQ. 2 C3H1-type zinc fingers span residues 307 to 335 and 353 to 381; these read RPDQ…HPVD and RPGV…HSMS. Residues 405-418 show a composition bias toward low complexity; sequence SSSLSGSSAPVSSS. The tract at residues 405–462 is disordered; that stretch reads SSSLSGSSAPVSSSNEPTKEAVTPAVSSMVSGLSRPEPAETSGDSASVSGSIEAKTSS. The span at 446–462 shows a compositional bias: polar residues; the sequence is SGDSASVSGSIEAKTSS.

The protein resides in the nucleus. In Arabidopsis thaliana (Mouse-ear cress), this protein is Zinc finger CCCH domain-containing protein 34.